The following is a 503-amino-acid chain: Probable zinc metalloprotease UREG_01421 (503 aa).

Positions methionine 1 to alanine 24 are cleaved as a signal peptide. Asparagine 105 is a glycosylation site (N-linked (GlcNAc...) asparagine). Histidine 176, aspartate 196, and glutamate 232 together coordinate Zn(2+). A glycan (N-linked (GlcNAc...) asparagine) is linked at asparagine 247. Aspartate 259 is a binding site for Zn(2+). One can recognise a Fibronectin type-III domain in the interval methionine 416–alanine 503. An N-linked (GlcNAc...) asparagine glycan is attached at asparagine 429.

The protein belongs to the peptidase M28 family. M28B subfamily. Zn(2+) is required as a cofactor.

The protein localises to the secreted. The polypeptide is Probable zinc metalloprotease UREG_01421 (Uncinocarpus reesii (strain UAMH 1704)).